The sequence spans 192 residues: Probable chorismate pyruvate-lyase (192 aa).

3 residues coordinate substrate: Arg-85, Leu-120, and Glu-176.

This sequence belongs to the UbiC family.

Its subcellular location is the cytoplasm. It carries out the reaction chorismate = 4-hydroxybenzoate + pyruvate. It functions in the pathway cofactor biosynthesis; ubiquinone biosynthesis. In terms of biological role, removes the pyruvyl group from chorismate, with concomitant aromatization of the ring, to provide 4-hydroxybenzoate (4HB) for the ubiquinone pathway. The polypeptide is Probable chorismate pyruvate-lyase (Pseudoalteromonas atlantica (strain T6c / ATCC BAA-1087)).